A 378-amino-acid polypeptide reads, in one-letter code: Biotin synthase (378 aa).

Positions asparagine 68–serine 292 constitute a Radical SAM core domain. [4Fe-4S] cluster is bound by residues cysteine 83, cysteine 87, and cysteine 90. Positions 129, 160, 220, and 296 each coordinate [2Fe-2S] cluster.

It belongs to the radical SAM superfamily. Biotin synthase family. In terms of assembly, homodimer. Requires [4Fe-4S] cluster as cofactor. [2Fe-2S] cluster is required as a cofactor.

The catalysed reaction is (4R,5S)-dethiobiotin + (sulfur carrier)-SH + 2 reduced [2Fe-2S]-[ferredoxin] + 2 S-adenosyl-L-methionine = (sulfur carrier)-H + biotin + 2 5'-deoxyadenosine + 2 L-methionine + 2 oxidized [2Fe-2S]-[ferredoxin]. The protein operates within cofactor biosynthesis; biotin biosynthesis; biotin from 7,8-diaminononanoate: step 2/2. In terms of biological role, catalyzes the conversion of dethiobiotin (DTB) to biotin by the insertion of a sulfur atom into dethiobiotin via a radical-based mechanism. In Psychrobacter arcticus (strain DSM 17307 / VKM B-2377 / 273-4), this protein is Biotin synthase.